Here is a 194-residue protein sequence, read N- to C-terminus: MNKVTKTAIAGLLALFAGNAAATDGEIVFDGEILKSACEINDSDKKIEVALGHYNAEQFRNIGERSPKIPFTIPLVNCPMTGWEHDNGNVEASFRLWLETRDNGTVPNFPNLAKVGSFAGIAATGVGIRIDDAESGNIMPLNAMGNDNTVYQIPAESNGIVNVDLIAYYVSTVVPSEITPGEADAIVNVTLDYR.

Residues 1-22 (MNKVTKTAIAGLLALFAGNAAA) form the signal peptide. A disulfide bond links Cys-38 and Cys-78.

The protein belongs to the fimbrial protein family.

The protein localises to the fimbrium. Part of the yraHIJK fimbrial operon. Could contribute to adhesion to various surfaces in specific environmental niches. Increases adhesion to eukaryotic T24 bladder epithelial cells in the absence of fim operon. This is an uncharacterized protein from Escherichia coli (strain K12).